The sequence spans 513 residues: Activin receptor type-2A (513 aa).

An N-terminal signal peptide occupies residues 1–19; it reads MGAAAKLAFAVFLISCSSG. The Extracellular portion of the chain corresponds to 20-135; the sequence is AILGRSETQE…TSNPVTPKPP (116 aa). Disulfide bonds link cysteine 30/cysteine 60, cysteine 50/cysteine 78, cysteine 85/cysteine 104, cysteine 91/cysteine 103, and cysteine 105/cysteine 110. 2 N-linked (GlcNAc...) asparagine glycosylation sites follow: asparagine 43 and asparagine 66. The helical transmembrane segment at 136 to 161 threads the bilayer; sequence YYNILLYSLVPLMLIAGIVICAFWVY. Residues 162 to 513 are Cytoplasmic-facing; that stretch reads RHHKMAYPPV…VDFPPKESSL (352 aa). The Protein kinase domain occupies 192–485; the sequence is LQLLEVKARG…GERITQMQRL (294 aa). ATP is bound by residues 198–206 and lysine 219; that span reads KARGRFGCV. Aspartate 322 functions as the Proton acceptor in the catalytic mechanism.

The protein belongs to the protein kinase superfamily. TKL Ser/Thr protein kinase family. TGFB receptor subfamily. Part of a complex consisting of MAGI2/ARIP1, ACVR2A, ACVR1B and SMAD3. Interacts with MAGI2/ARIP1. Interacts with type I receptor ACVR1. Interacts with BMP7. Interacts with TSC22D1/TSC-22. Interacts with activin A/INHBA. Mg(2+) serves as cofactor. The cofactor is Mn(2+). As to expression, brain, testis, intestine, liver and kidney.

It is found in the cell membrane. It catalyses the reaction L-threonyl-[receptor-protein] + ATP = O-phospho-L-threonyl-[receptor-protein] + ADP + H(+). The enzyme catalyses L-seryl-[receptor-protein] + ATP = O-phospho-L-seryl-[receptor-protein] + ADP + H(+). Functionally, on ligand binding, forms a receptor complex consisting of two type II and two type I transmembrane serine/threonine kinases. Type II receptors phosphorylate and activate type I receptors which autophosphorylate, then bind and activate SMAD transcriptional regulators. Receptor for activin A, activin B and inhibin A. Mediates induction of adipogenesis by GDF6. The chain is Activin receptor type-2A from Mus musculus (Mouse).